The following is a 329-amino-acid chain: Glycerol-3-phosphate dehydrogenase [NAD(P)+] (329 aa).

Positions 10, 11, 31, and 105 each coordinate NADPH. Residues K105, G134, and S136 each coordinate sn-glycerol 3-phosphate. Position 138 (A138) interacts with NADPH. 5 residues coordinate sn-glycerol 3-phosphate: K189, D242, S252, R253, and N254. Residue K189 is the Proton acceptor of the active site. R253 is an NADPH binding site. Positions 277 and 279 each coordinate NADPH.

It belongs to the NAD-dependent glycerol-3-phosphate dehydrogenase family.

Its subcellular location is the cytoplasm. It carries out the reaction sn-glycerol 3-phosphate + NAD(+) = dihydroxyacetone phosphate + NADH + H(+). It catalyses the reaction sn-glycerol 3-phosphate + NADP(+) = dihydroxyacetone phosphate + NADPH + H(+). It functions in the pathway membrane lipid metabolism; glycerophospholipid metabolism. In terms of biological role, catalyzes the reduction of the glycolytic intermediate dihydroxyacetone phosphate (DHAP) to sn-glycerol 3-phosphate (G3P), the key precursor for phospholipid synthesis. In Neisseria meningitidis serogroup C (strain 053442), this protein is Glycerol-3-phosphate dehydrogenase [NAD(P)+].